A 215-amino-acid chain; its full sequence is Cytidylate kinase (215 aa).

Position 10-18 (10-18 (GPAAAGKST)) interacts with ATP.

It belongs to the cytidylate kinase family. Type 1 subfamily.

It localises to the cytoplasm. It catalyses the reaction CMP + ATP = CDP + ADP. The enzyme catalyses dCMP + ATP = dCDP + ADP. The polypeptide is Cytidylate kinase (Staphylococcus epidermidis (strain ATCC 35984 / DSM 28319 / BCRC 17069 / CCUG 31568 / BM 3577 / RP62A)).